The chain runs to 473 residues: UDP-N-acetylmuramoylalanine--D-glutamate ligase (473 aa).

Gly120–Thr126 contacts ATP.

The protein belongs to the MurCDEF family.

Its subcellular location is the cytoplasm. The catalysed reaction is UDP-N-acetyl-alpha-D-muramoyl-L-alanine + D-glutamate + ATP = UDP-N-acetyl-alpha-D-muramoyl-L-alanyl-D-glutamate + ADP + phosphate + H(+). Its pathway is cell wall biogenesis; peptidoglycan biosynthesis. Its function is as follows. Cell wall formation. Catalyzes the addition of glutamate to the nucleotide precursor UDP-N-acetylmuramoyl-L-alanine (UMA). This is UDP-N-acetylmuramoylalanine--D-glutamate ligase from Nitrosospira multiformis (strain ATCC 25196 / NCIMB 11849 / C 71).